A 547-amino-acid chain; its full sequence is Germacrene A synthase (547 aa).

Positions 300, 304, 443, and 451 each coordinate Mg(2+). The short motif at 300–304 is the DDXXD motif element; that stretch reads DDTYD.

This sequence belongs to the terpene synthase family. Tpsa subfamily. Mg(2+) serves as cofactor. It depends on Mn(2+) as a cofactor. In terms of tissue distribution, expressed in leaves.

Its subcellular location is the plastid. The protein resides in the chloroplast. The enzyme catalyses (2E,6E)-farnesyl diphosphate = germacrene A + diphosphate. The catalysed reaction is (2E,6E)-farnesyl diphosphate = (1S,2S,4R)-beta-elemene + diphosphate. It functions in the pathway secondary metabolite biosynthesis; terpenoid biosynthesis. Sesquiterpene synthase involved in the biosynthesis of volatile compounds widely used in aromatherapy and folk medicine, and present in culinary herbs. Mediates the conversion of (2E,6E)-farnesyl diphosphate (FPP) into germacrene A and beta-elemene. Not able to use (2E)-geranyl diphosphate (GPP) as substrate. The polypeptide is Germacrene A synthase (Lavandula pedunculata subsp. lusitanica (French lavender)).